Reading from the N-terminus, the 267-residue chain is tRNA pseudouridine synthase A (267 aa).

The active-site Nucleophile is Asp-52. Tyr-110 lines the substrate pocket.

This sequence belongs to the tRNA pseudouridine synthase TruA family. In terms of assembly, homodimer.

It catalyses the reaction uridine(38/39/40) in tRNA = pseudouridine(38/39/40) in tRNA. In terms of biological role, formation of pseudouridine at positions 38, 39 and 40 in the anticodon stem and loop of transfer RNAs. This Paraburkholderia phymatum (strain DSM 17167 / CIP 108236 / LMG 21445 / STM815) (Burkholderia phymatum) protein is tRNA pseudouridine synthase A.